The following is a 1207-amino-acid chain: DNA-directed RNA polymerase subunit beta (1207 aa).

This sequence belongs to the RNA polymerase beta chain family. The RNAP catalytic core consists of 2 alpha, 1 beta, 1 beta' and 1 omega subunit. When a sigma factor is associated with the core the holoenzyme is formed, which can initiate transcription.

The enzyme catalyses RNA(n) + a ribonucleoside 5'-triphosphate = RNA(n+1) + diphosphate. DNA-dependent RNA polymerase catalyzes the transcription of DNA into RNA using the four ribonucleoside triphosphates as substrates. This chain is DNA-directed RNA polymerase subunit beta, found in Enterococcus faecalis (strain ATCC 700802 / V583).